Reading from the N-terminus, the 2962-residue chain is Sex determination and dosage compensation protein sdc-2 (2962 aa).

Disordered stretches follow at residues 1–28 (MSDE…ADPD) and 1061–1110 (DKRS…QVDP). Residues 15–27 (SFNESDSPDEADP) are compositionally biased toward acidic residues. Coiled coils occupy residues 995–1085 (LESA…LADK) and 1140–1268 (REER…KRVS). 2 disordered regions span residues 1535-1554 (PASL…GSPV) and 2198-2227 (LDSS…NQLD). A compositionally biased stretch (acidic residues) spans 2212–2225 (FEDSPSEDENDENQ).

In terms of assembly, component of the SDC complex, which consists of sdc-1, sdc-2 and sdc-3. Within the complex, interacts with sdc-1 and sdc-3. In terms of tissue distribution, expressed in hermaphrodites (XX), but absent in males (XO) (at protein level).

It localises to the chromosome. Its function is as follows. Component of the SDC complex that functions in sex determination and in X chromosome dosage compensation specifically in hermaphrodite (XX) animals. Required for the recruitment of the condensin I-like dosage compensation complex to the male sex-determining autosomal gene her-1, thereby contributing to its repression and initiating hermaphrodite sexual development. Plays a central role in X-chromosome recognition and in the recruitment and assembly of the dosage compensation complex and the dosage compensation protein dpy-21 onto the X chromosomes in hermaphrodites, which leads to a reduction of X-linked gene transcription and an equalization of X-linked gene expression between the sexes. May confer protection against toxicity induced by heavy metals such as arsenite. This is Sex determination and dosage compensation protein sdc-2 from Caenorhabditis elegans.